A 390-amino-acid polypeptide reads, in one-letter code: Ribonuclease D (390 aa).

The 3'-5' exonuclease domain occupies 7 to 173 (ITDSATLAAL…TLFPMLLKEL (167 aa)). In terms of domain architecture, HRDC spans 212 to 293 (KADILGRLKA…ENAEALRPEE (82 aa)).

This sequence belongs to the RNase D family. It depends on a divalent metal cation as a cofactor.

It localises to the cytoplasm. The catalysed reaction is Exonucleolytic cleavage that removes extra residues from the 3'-terminus of tRNA to produce 5'-mononucleotides.. Its function is as follows. Exonuclease involved in the 3' processing of various precursor tRNAs. Initiates hydrolysis at the 3'-terminus of an RNA molecule and releases 5'-mononucleotides. This chain is Ribonuclease D, found in Zymomonas mobilis subsp. mobilis (strain ATCC 31821 / ZM4 / CP4).